The primary structure comprises 296 residues: MAFKYHKVAIVGKHYKKEVSQMVETLYAYLQQQGLEIIIENDTAADTSLVNVAIASLKEIALRCDVAIVVGGDGNFLKASRLLALYSNIPVIGINKGKLGFLTTLAADDNALKNDLYAILKGDSSVTKMSMLKYRVDNNLRAPLEASIALNEIAITASRGLMFGLKVFIDGRYAFDQRGDGLIVSTPTGSTAHAMSAGGPILNPNQNSVVLVPICSHSLNSRPLVISDESVIDIYITDYNDPESVLSIDGRHDTILKAHQKVTIQKARKKVTVLHTKDYNYYDTLREKLGWSKVLF.

Asp-73 acts as the Proton acceptor in catalysis. Residues 73–74 (DG), Lys-78, 151–152 (NE), Arg-178, Asp-180, and 191–196 (TAHAMS) contribute to the NAD(+) site.

The protein belongs to the NAD kinase family. It depends on a divalent metal cation as a cofactor.

The protein localises to the cytoplasm. It catalyses the reaction NAD(+) + ATP = ADP + NADP(+) + H(+). Its function is as follows. Involved in the regulation of the intracellular balance of NAD and NADP, and is a key enzyme in the biosynthesis of NADP. Catalyzes specifically the phosphorylation on 2'-hydroxyl of the adenosine moiety of NAD to yield NADP. This Francisella tularensis subsp. tularensis (strain WY96-3418) protein is NAD kinase.